Consider the following 318-residue polypeptide: Cytochrome f (318 aa).

The N-terminal stretch at 1 to 34 (MQNRNFFEYPKNWIILLIPIFTTFNLLFTSDCYA) is a signal peptide. Phe-35, Cys-55, Cys-58, and His-59 together coordinate heme. Residues 284 to 303 (LQGLLVFLFLVVLAQVFLVL) traverse the membrane as a helical segment.

Belongs to the cytochrome f family. The 4 large subunits of the cytochrome b6-f complex are cytochrome b6, subunit IV (17 kDa polypeptide, petD), cytochrome f and the Rieske protein, while the 4 small subunits are PetG, PetL, PetM and PetN. The complex functions as a dimer. Requires heme as cofactor.

The protein localises to the plastid. The protein resides in the chloroplast thylakoid membrane. Its function is as follows. Component of the cytochrome b6-f complex, which mediates electron transfer between photosystem II (PSII) and photosystem I (PSI), cyclic electron flow around PSI, and state transitions. This is Cytochrome f from Chaetosphaeridium globosum (Charophycean green alga).